The chain runs to 300 residues: Diphthine methyl ester synthase (300 aa).

S-adenosyl-L-methionine-binding positions include L9, D85, G88, 113-114, and L164; that span reads SV. A Phosphoserine modification is found at S172. L222 and H247 together coordinate S-adenosyl-L-methionine. S298 bears the Phosphoserine mark.

This sequence belongs to the diphthine synthase family.

It is found in the cytoplasm. The catalysed reaction is 2-[(3S)-amino-3-carboxypropyl]-L-histidyl-[translation elongation factor 2] + 4 S-adenosyl-L-methionine = diphthine methyl ester-[translation elongation factor 2] + 4 S-adenosyl-L-homocysteine + 3 H(+). Its pathway is protein modification; peptidyl-diphthamide biosynthesis. In terms of biological role, S-adenosyl-L-methionine-dependent methyltransferase that catalyzes four methylations of the modified target histidine residue in translation elongation factor 2 (EF-2), to form an intermediate called diphthine methyl ester. The four successive methylation reactions represent the second step of diphthamide biosynthesis. This is Diphthine methyl ester synthase (DPH5) from Saccharomyces cerevisiae (strain ATCC 204508 / S288c) (Baker's yeast).